The following is a 400-amino-acid chain: Large envelope protein (400 aa).

Disordered stretches follow at residues 1-50 and 84-116; these read MGGW…PHKD and ILTS…RDTH. G2 is lipidated: N-myristoyl glycine; by host. A pre-S1 region spans residues 2 to 119; sequence GGWSSKPRKG…PPLRDTHPQA (118 aa). Positions 2–174 are pre-S; sequence GGWSSKPRKG…LSTTGDPVPN (173 aa). The Virion surface; in external conformation portion of the chain corresponds to 2 to 181; it reads GGWSSKPRKG…VPNMENIASG (180 aa). At 2 to 253 the chain is on the intravirion; in internal conformation side; sequence GGWSSKPRKG…PGYRWMCLRR (252 aa). Polar residues predominate over residues 96 to 106; it reads STNRQSGRQPT. Positions 120 to 174 are pre-S2; that stretch reads VQWNSTTFHQTLQDPRVRALYLPAGGSSSGTVSPAQNTVSAISSILSTTGDPVPN. A helical transmembrane segment spans residues 182-202; sequence LLGPLLVLQAGFFSLTKILTI. Residues 203-253 lie on the Intravirion; in external conformation side of the membrane; it reads PQSLDSWWTSLNFLGGTPVCLGQNSQSQISSHSPTCCPPICPGYRWMCLRR. The helical transmembrane segment at 254-274 threads the bilayer; the sequence is FIIFLCILLLCLIFLLVLLDY. The Virion surface segment spans residues 275 to 348; sequence QGMLPVCPLI…WASVRFSWLS (74 aa). N-linked (GlcNAc...) asparagine; by host glycosylation occurs at N320. The helical transmembrane segment at 349 to 369 threads the bilayer; it reads LLVPFVQWFVGLSPTVWLSVI. Residues 370 to 375 lie on the Intravirion side of the membrane; that stretch reads WMMWFW. A helical membrane pass occupies residues 376 to 398; it reads GPSLYNILSPFMPLLPIFLCLWV. At 399–400 the chain is on the virion surface side; sequence YM.

Belongs to the orthohepadnavirus major surface antigen family. In terms of assembly, li-HBsAg interacts with capsid protein and with HDV Large delta antigen. Isoform M associates with host chaperone CANX through its pre-S2 N glycan. This association may be essential for M proper secretion. Interacts (via its myristoylated pre-S1 region) with the host SLC10A1/NTCP; this interaction is essential for viral entry. Post-translationally, isoform M is N-terminally acetylated by host at a ratio of 90%, and N-glycosylated by host at the pre-S2 region. Myristoylated; this modification is essential for its interaction with the host protein SLC10A1/NTCP.

The protein resides in the virion membrane. In terms of biological role, the large envelope protein exists in two topological conformations, one which is termed 'external' or Le-HBsAg and the other 'internal' or Li-HBsAg. In its external conformation the protein attaches the virus to cell receptors and thereby initiating infection. This interaction determines the species specificity and liver tropism. This attachment induces virion internalization predominantly through caveolin-mediated endocytosis. The large envelope protein also assures fusion between virion membrane and endosomal membrane. In its internal conformation the protein plays a role in virion morphogenesis and mediates the contact with the nucleocapsid like a matrix protein. The middle envelope protein plays an important role in the budding of the virion. It is involved in the induction of budding in a nucleocapsid independent way. In this process the majority of envelope proteins bud to form subviral lipoprotein particles of 22 nm of diameter that do not contain a nucleocapsid. The polypeptide is Large envelope protein (Homo sapiens (Human)).